The following is a 100-amino-acid chain: Integration host factor subunit alpha (100 aa).

Belongs to the bacterial histone-like protein family. In terms of assembly, heterodimer of an alpha and a beta chain.

In terms of biological role, this protein is one of the two subunits of integration host factor, a specific DNA-binding protein that functions in genetic recombination as well as in transcriptional and translational control. The chain is Integration host factor subunit alpha from Hahella chejuensis (strain KCTC 2396).